Here is a 919-residue protein sequence, read N- to C-terminus: Isoleucine--tRNA ligase (919 aa).

The 'HIGH' region signature appears at 57–67; that stretch reads PYANGHTHIGH. Glutamate 569 provides a ligand contact to L-isoleucyl-5'-AMP. The 'KMSKS' region signature appears at 610 to 614; sequence KMSKS. Lysine 613 serves as a coordination point for ATP. 4 residues coordinate Zn(2+): cysteine 895, cysteine 898, cysteine 910, and cysteine 913.

This sequence belongs to the class-I aminoacyl-tRNA synthetase family. IleS type 1 subfamily. As to quaternary structure, monomer. It depends on Zn(2+) as a cofactor.

The protein resides in the cytoplasm. The enzyme catalyses tRNA(Ile) + L-isoleucine + ATP = L-isoleucyl-tRNA(Ile) + AMP + diphosphate. Catalyzes the attachment of isoleucine to tRNA(Ile). As IleRS can inadvertently accommodate and process structurally similar amino acids such as valine, to avoid such errors it has two additional distinct tRNA(Ile)-dependent editing activities. One activity is designated as 'pretransfer' editing and involves the hydrolysis of activated Val-AMP. The other activity is designated 'posttransfer' editing and involves deacylation of mischarged Val-tRNA(Ile). In Sulfurimonas denitrificans (strain ATCC 33889 / DSM 1251) (Thiomicrospira denitrificans (strain ATCC 33889 / DSM 1251)), this protein is Isoleucine--tRNA ligase.